Reading from the N-terminus, the 417-residue chain is Serine hydroxymethyltransferase (417 aa).

Residues Leu121 and 125-127 (GHL) each bind (6S)-5,6,7,8-tetrahydrofolate. Lys229 bears the N6-(pyridoxal phosphate)lysine mark. 354–356 (SPF) is a (6S)-5,6,7,8-tetrahydrofolate binding site.

The protein belongs to the SHMT family. As to quaternary structure, homodimer. Pyridoxal 5'-phosphate serves as cofactor.

It is found in the cytoplasm. The enzyme catalyses (6R)-5,10-methylene-5,6,7,8-tetrahydrofolate + glycine + H2O = (6S)-5,6,7,8-tetrahydrofolate + L-serine. Its pathway is one-carbon metabolism; tetrahydrofolate interconversion. It participates in amino-acid biosynthesis; glycine biosynthesis; glycine from L-serine: step 1/1. Its function is as follows. Catalyzes the reversible interconversion of serine and glycine with tetrahydrofolate (THF) serving as the one-carbon carrier. This reaction serves as the major source of one-carbon groups required for the biosynthesis of purines, thymidylate, methionine, and other important biomolecules. Also exhibits THF-independent aldolase activity toward beta-hydroxyamino acids, producing glycine and aldehydes, via a retro-aldol mechanism. The polypeptide is Serine hydroxymethyltransferase (Stutzerimonas stutzeri (strain A1501) (Pseudomonas stutzeri)).